The sequence spans 359 residues: Peptide chain release factor 1 (359 aa).

Glutamine 236 carries the N5-methylglutamine modification. Residues 288 to 308 form a disordered region; that stretch reads QDEQDAERKSTIGTGDRSERI. Positions 293 to 308 are enriched in basic and acidic residues; that stretch reads AERKSTIGTGDRSERI.

It belongs to the prokaryotic/mitochondrial release factor family. In terms of processing, methylated by PrmC. Methylation increases the termination efficiency of RF1.

It localises to the cytoplasm. Peptide chain release factor 1 directs the termination of translation in response to the peptide chain termination codons UAG and UAA. This is Peptide chain release factor 1 from Streptococcus uberis (strain ATCC BAA-854 / 0140J).